Consider the following 1036-residue polypeptide: Nitrogen catabolic enzyme regulatory protein (1036 aa).

The span at 1-17 (MAASTTTPTATTRPFFT) shows a compositional bias: low complexity. Disordered stretches follow at residues 1-126 (MAAS…HTQS), 207-240 (TDRTHRFSESAPQKSTSGIARLRKSSEQTQSQGS), 256-298 (TPAG…QSQH), 318-351 (GYLPRHLRKTSIDETSKRNPNRKRPADFSPHVSA), 590-743 (SSQG…PTTC), 792-976 (RGSG…PTTQ), and 1000-1028 (GMPNGQAGQMMGASSSSGPGSGPSRTGAE). A compositionally biased stretch (basic and acidic residues) spans 23–34 (TEHDFRFPRRPG). The span at 45-56 (AAMSSSSANNNH) shows a compositional bias: low complexity. Tandem repeats lie at residues 49 to 55 (SSSANNN), 87 to 92 (SSSNNN), and 105 to 110 (SSSNNN). A 3 X approximate repeats region spans residues 49-110 (SSSANNNHNQ…INHQSSSNNN (62 aa)). Positions 100 to 114 (NINHQSSSNNNISKN) are enriched in low complexity. Residues 652-661 (PRSQSQSFRQ) show a composition bias toward polar residues. The span at 703-714 (SSGLSSVPASRP) shows a compositional bias: low complexity. Polar residues predominate over residues 723 to 736 (QGSTTNLQGAAGNS). The GATA-type zinc-finger motif lies at 743–767 (CTNCFTQTTPLWRRNPDGQPLCNAC). A compositionally biased stretch (polar residues) spans 802–827 (GTSTRSKKNASMSAAARKNSTLSITS). 2 stretches are compositionally biased toward low complexity: residues 828 to 861 (NANNQPPAQVATPPAQQQVRASSVNESESPASGP) and 868 to 899 (AGSTPTSYHGSTGSTSGAVGGKSVIPIASAPP). Residues 927 to 961 (SAGSDQPVSAGAVSSSGMDVDSPANSTGSNETMPT) show a composition bias toward polar residues. The segment covering 1000–1023 (GMPNGQAGQMMGASSSSGPGSGPS) has biased composition (low complexity).

In terms of assembly, interacts with nmr.

The protein resides in the nucleus. Major nitrogen regulatory protein. During conditions of nitrogen limitation it turns on the expression of genes for enzymes which are required for the use of a variety of secondary nitrogen sources, including nitrates, purines, amino acids, and proteins. This is Nitrogen catabolic enzyme regulatory protein (nit-2) from Neurospora crassa (strain ATCC 24698 / 74-OR23-1A / CBS 708.71 / DSM 1257 / FGSC 987).